The chain runs to 351 residues: Probable dual-specificity RNA methyltransferase RlmN (351 aa).

The Proton acceptor role is filled by E92. A Radical SAM core domain is found at 98–332 (TDQRLTVCIS…VSLRASRGLD (235 aa)). An intrachain disulfide couples C105 to C337. C112, C116, and C119 together coordinate [4Fe-4S] cluster. Residues 159–160 (GE), S189, 218–220 (SLH), and N294 contribute to the S-adenosyl-L-methionine site. C337 (S-methylcysteine intermediate) is an active-site residue.

This sequence belongs to the radical SAM superfamily. RlmN family. [4Fe-4S] cluster serves as cofactor.

The protein resides in the cytoplasm. It catalyses the reaction adenosine(2503) in 23S rRNA + 2 reduced [2Fe-2S]-[ferredoxin] + 2 S-adenosyl-L-methionine = 2-methyladenosine(2503) in 23S rRNA + 5'-deoxyadenosine + L-methionine + 2 oxidized [2Fe-2S]-[ferredoxin] + S-adenosyl-L-homocysteine. The enzyme catalyses adenosine(37) in tRNA + 2 reduced [2Fe-2S]-[ferredoxin] + 2 S-adenosyl-L-methionine = 2-methyladenosine(37) in tRNA + 5'-deoxyadenosine + L-methionine + 2 oxidized [2Fe-2S]-[ferredoxin] + S-adenosyl-L-homocysteine. In terms of biological role, specifically methylates position 2 of adenine 2503 in 23S rRNA and position 2 of adenine 37 in tRNAs. The polypeptide is Probable dual-specificity RNA methyltransferase RlmN (Synechococcus sp. (strain CC9902)).